We begin with the raw amino-acid sequence, 190 residues long: dCTP deaminase, dUMP-forming (190 aa).

DCTP contacts are provided by residues Lys101–Arg106, Asp119, Thr127–Glu129, Gln148, Tyr162, and Gln174. Residue Glu129 is the Proton donor/acceptor of the active site. Positions Pro161 to Asp190 are disordered. The span at Gly163 to Asp190 shows a compositional bias: polar residues.

The protein belongs to the dCTP deaminase family. Homotrimer.

It carries out the reaction dCTP + 2 H2O = dUMP + NH4(+) + diphosphate. It participates in pyrimidine metabolism; dUMP biosynthesis; dUMP from dCTP: step 1/1. Functionally, bifunctional enzyme that catalyzes both the deamination of dCTP to dUTP and the hydrolysis of dUTP to dUMP without releasing the toxic dUTP intermediate. The chain is dCTP deaminase, dUMP-forming from Mycolicibacterium vanbaalenii (strain DSM 7251 / JCM 13017 / BCRC 16820 / KCTC 9966 / NRRL B-24157 / PYR-1) (Mycobacterium vanbaalenii).